Reading from the N-terminus, the 384-residue chain is Probable inactive linolenate hydroperoxide lyase (384 aa).

Cys346 is a binding site for heme.

This sequence belongs to the cytochrome P450 family. Heme serves as cofactor. As to expression, expressed in roots, leaves, flowers and siliques.

This Arabidopsis thaliana (Mouse-ear cress) protein is Probable inactive linolenate hydroperoxide lyase.